We begin with the raw amino-acid sequence, 290 residues long: Non-homologous end joining protein Ku (290 aa).

The Ku domain occupies 11-183 (TFGLISMPVR…EAPKITSEVK (173 aa)). The disordered stretch occupies residues 253–290 (MKDQKKGSRLAEVDKESTVQMTPKKPAVKERRGRKRVA). Residues 254-269 (KDQKKGSRLAEVDKES) show a composition bias toward basic and acidic residues.

This sequence belongs to the prokaryotic Ku family. In terms of assembly, homodimer. Interacts with LigD.

With LigD forms a non-homologous end joining (NHEJ) DNA repair enzyme, which repairs dsDNA breaks with reduced fidelity. Binds linear dsDNA with 5'- and 3'- overhangs but not closed circular dsDNA nor ssDNA. Recruits and stimulates the ligase activity of LigD. The protein is Non-homologous end joining protein Ku of Koribacter versatilis (strain Ellin345).